The chain runs to 234 residues: MKIKWLGHSAFHVETAKAKILIDPFFTGNPAFRDGERRAVTAGLTHILLTHGHGDHVGDTVAIAKETGATVLANFDLCMWLGRQGVAKLEPGNTGGTIRLGSFSATFVNALHSSAQITEDGVSHSLGNANGLVLHFDDEPTLYHMGDTDIFSDMALVQELHEPEIGIVPIGDRFTMGGAVAALACQRYFKFATAIPCHYGSFPIIDQTPETFVAGMDGASTLVATPEVGGIVNA.

The protein belongs to the UPF0173 family.

In Sinorhizobium medicae (strain WSM419) (Ensifer medicae), this protein is UPF0173 metal-dependent hydrolase Smed_0942.